Reading from the N-terminus, the 77-residue chain is Protein IDA (77 aa).

An N-terminal signal peptide occupies residues 1-26; the sequence is MAPCRTMMVLLCFVLFLAASSSCVAA. Positions 56–69 are RLK5-binding; sequence GVPIPPSAPSKRHN.

As to quaternary structure, interaction with RLK5. Expressed specifically in the floral abscission zone.

It localises to the secreted. It is found in the extracellular space. Its function is as follows. Involved in an ethylene-independent separation step of floral abscission. Promotes abscission zone (AZ) cells rounding. May act with RLK5 and HSL2 as ligand-receptor pairs. The sequence is that of Protein IDA from Arabidopsis thaliana (Mouse-ear cress).